We begin with the raw amino-acid sequence, 638 residues long: Nucleolar protein 4 (638 aa).

Disordered stretches follow at residues 210 to 312 (QQDE…SPLS), 343 to 403 (EREA…TDGV), 503 to 535 (NAAKRMRLERQQDESAPADKQCKPEATQATYST), and 573 to 603 (SSGPTDLSMKRQLATSSGSSSSSNSRPQLSP). The segment covering 211-225 (QDEDESSIESDEFDM) has biased composition (acidic residues). Polar residues-rich tracts occupy residues 229-254 (TRMSAVNSDLSSNLEERMQSPQNLHG), 263-281 (ESFNGNETLGHSSIASGGT), 302-312 (QPLNLSDSPLS), and 351-363 (SKSPAHSYSSYDS). Composition is skewed to basic and acidic residues over residues 364-374 (GKNESVDRGAE), 391-403 (HDDSEKVNETDGV), and 503-515 (NAAKRMRLERQQD). A compositionally biased stretch (low complexity) spans 588 to 597 (SSGSSSSSNS).

As to expression, expressed predominantly in fetal brain, adult brain and testis.

Its subcellular location is the nucleus. The protein localises to the nucleolus. The protein is Nucleolar protein 4 (NOL4) of Homo sapiens (Human).